A 136-amino-acid chain; its full sequence is Aspartate 1-decarboxylase (136 aa).

The Schiff-base intermediate with substrate; via pyruvic acid role is filled by S25. Position 25 is a pyruvic acid (Ser) (S25). Substrate is bound at residue T57. The Proton donor role is filled by Y58. Residue 73–75 (GAA) coordinates substrate.

This sequence belongs to the PanD family. In terms of assembly, heterooctamer of four alpha and four beta subunits. Pyruvate is required as a cofactor. Post-translationally, is synthesized initially as an inactive proenzyme, which is activated by self-cleavage at a specific serine bond to produce a beta-subunit with a hydroxyl group at its C-terminus and an alpha-subunit with a pyruvoyl group at its N-terminus.

It is found in the cytoplasm. It carries out the reaction L-aspartate + H(+) = beta-alanine + CO2. It participates in cofactor biosynthesis; (R)-pantothenate biosynthesis; beta-alanine from L-aspartate: step 1/1. Catalyzes the pyruvoyl-dependent decarboxylation of aspartate to produce beta-alanine. This Corynebacterium glutamicum (strain R) protein is Aspartate 1-decarboxylase.